A 201-amino-acid chain; its full sequence is Peptidyl-tRNA hydrolase (201 aa).

Tyr17 serves as a coordination point for tRNA. His22 functions as the Proton acceptor in the catalytic mechanism. Positions 68, 70, and 116 each coordinate tRNA.

It belongs to the PTH family. As to quaternary structure, monomer.

It localises to the cytoplasm. The enzyme catalyses an N-acyl-L-alpha-aminoacyl-tRNA + H2O = an N-acyl-L-amino acid + a tRNA + H(+). In terms of biological role, hydrolyzes ribosome-free peptidyl-tRNAs (with 1 or more amino acids incorporated), which drop off the ribosome during protein synthesis, or as a result of ribosome stalling. Functionally, catalyzes the release of premature peptidyl moieties from peptidyl-tRNA molecules trapped in stalled 50S ribosomal subunits, and thus maintains levels of free tRNAs and 50S ribosomes. The protein is Peptidyl-tRNA hydrolase of Lawsonia intracellularis (strain PHE/MN1-00).